The chain runs to 258 residues: Chaperone protein FaeE (258 aa).

A signal peptide spans 1 to 34; the sequence is MSKRNAVTTFFTNRVTKALGMTLALMMTCQSAMA. Positions 239 to 258 are disordered; the sequence is KKPAAPEAAKAEKADTAEQK. The segment covering 247–258 has biased composition (basic and acidic residues); that stretch reads AKAEKADTAEQK.

The protein belongs to the periplasmic pilus chaperone family.

The protein localises to the periplasm. Functionally, mediates assembly of pili by forming soluble multimeric complexes with pili subunits as an intermediate step in the assembly process. This protein is involved in K88 pili assembly. Protects pilin protein from proteolytic degradation by DegP and from premature polymerization. In Escherichia coli, this protein is Chaperone protein FaeE (faeE).